The sequence spans 266 residues: Phosphatidylserine decarboxylase proenzyme (266 aa).

Catalysis depends on charge relay system; for autoendoproteolytic cleavage activity residues Asp-74, His-135, and Ser-237. The Schiff-base intermediate with substrate; via pyruvic acid; for decarboxylase activity role is filled by Ser-237. Ser-237 carries the pyruvic acid (Ser); by autocatalysis modification.

This sequence belongs to the phosphatidylserine decarboxylase family. PSD-B subfamily. Prokaryotic type I sub-subfamily. In terms of assembly, heterodimer of a large membrane-associated beta subunit and a small pyruvoyl-containing alpha subunit. It depends on pyruvate as a cofactor. Post-translationally, is synthesized initially as an inactive proenzyme. Formation of the active enzyme involves a self-maturation process in which the active site pyruvoyl group is generated from an internal serine residue via an autocatalytic post-translational modification. Two non-identical subunits are generated from the proenzyme in this reaction, and the pyruvate is formed at the N-terminus of the alpha chain, which is derived from the carboxyl end of the proenzyme. The autoendoproteolytic cleavage occurs by a canonical serine protease mechanism, in which the side chain hydroxyl group of the serine supplies its oxygen atom to form the C-terminus of the beta chain, while the remainder of the serine residue undergoes an oxidative deamination to produce ammonia and the pyruvoyl prosthetic group on the alpha chain. During this reaction, the Ser that is part of the protease active site of the proenzyme becomes the pyruvoyl prosthetic group, which constitutes an essential element of the active site of the mature decarboxylase.

It localises to the cell membrane. The enzyme catalyses a 1,2-diacyl-sn-glycero-3-phospho-L-serine + H(+) = a 1,2-diacyl-sn-glycero-3-phosphoethanolamine + CO2. It participates in phospholipid metabolism; phosphatidylethanolamine biosynthesis; phosphatidylethanolamine from CDP-diacylglycerol: step 2/2. Its function is as follows. Catalyzes the formation of phosphatidylethanolamine (PtdEtn) from phosphatidylserine (PtdSer). The polypeptide is Phosphatidylserine decarboxylase proenzyme (Campylobacter jejuni subsp. jejuni serotype O:2 (strain ATCC 700819 / NCTC 11168)).